The primary structure comprises 149 residues: MKLTDYVKQVSLEDFGRPFIHHVQWNRRLRSTGGRFFPKDGHLDFNPKVYQELGLDVFRKIVRHELCHYHLYFQGKGYQHKDRDFKELLKAVDGLRFVPSLPNSNSKPLKLYRCQSCQQRYQRKRRIDTKRYRCGLCRGKLLLINQPED.

Residues 4-143 form the SprT-like domain; that stretch reads TDYVKQVSLE…CGLCRGKLLL (140 aa). Position 64 (H64) interacts with Zn(2+). The active site involves E65. H68 contributes to the Zn(2+) binding site.

This sequence belongs to the SprT family. Zn(2+) serves as cofactor.

The protein localises to the cytoplasm. The sequence is that of Protein SprT-like from Streptococcus pneumoniae (strain JJA).